Here is a 631-residue protein sequence, read N- to C-terminus: Poly(A)-specific ribonuclease PARN (631 aa).

A divalent metal cation-binding residues include Asp28 and Glu30. Residues 147 to 173 are disordered; it reads EDRRSQSNGASTMSYISPNSSKTPVSI. The segment covering 152-170 has biased composition (polar residues); sequence QSNGASTMSYISPNSSKTP. Residues 178-244 form the R3H domain; that stretch reads KGFIDKVVER…ERYIVISKVD (67 aa). A divalent metal cation is bound by residues Asp291 and Asp381. The tract at residues 568–631 is disordered; it reads SPIQEEAASD…SVLFEVPDTW (64 aa).

It belongs to the CAF1 family. In terms of assembly, component of a complex at least composed of cpeb1, cpsf1, papd4/gld2, pabpc1/ePAB, parn and sympk. It depends on a divalent metal cation as a cofactor. In terms of processing, a 62 kDa form, which is produced by proteolytic cleavage, also exists. As to expression, in retina, it is constitutively present in most retinal cells, including the photoreceptors.

Its subcellular location is the cytoplasm. The protein localises to the nucleus. It catalyses the reaction Exonucleolytic cleavage of poly(A) to 5'-AMP.. In terms of biological role, 3'-exoribonuclease that has a preference for poly(A) tails of mRNAs, thereby efficiently degrading poly(A) tails. Exonucleolytic degradation of the poly(A) tail is often the first step in the decay of eukaryotic mRNAs. Required during meiotic maturation to silence certain maternal mRNAs translationally. Does not require an adenosine residue at the 3' end, however, the addition of 25 non-adenylate residues at the 3' terminus, or a 3' terminal phosphate is inhibitory. Involved in dormant mRNAs regulation during oocyte maturation by counteracting polyadenylation mediated by papd4/gld2nt in immature eggs. During maturation it is excluded from the ribonucleoprotein complex, allowing poly(A) elongation by papd4/gld2nt and activation of mRNAs. The sequence is that of Poly(A)-specific ribonuclease PARN (parn) from Xenopus laevis (African clawed frog).